The chain runs to 609 residues: Putative pectinesterase/pectinesterase inhibitor 45 (609 aa).

The helical transmembrane segment at 25–45 threads the bilayer; it reads IILGVVSVLVVAAAIIGGAFA. N-linked (GlcNAc...) asparagine glycosylation is found at asparagine 51, asparagine 62, asparagine 100, asparagine 114, asparagine 183, asparagine 229, asparagine 296, asparagine 306, asparagine 346, and asparagine 362. Positions 54–87 are disordered; the sequence is QEQGKTTNNKSKDSPTKSESPSPKPPSSAAQTVK. A pectinesterase inhibitor 45 region spans residues 89–241; sequence GQVDKIIQTL…QVLTSNSLAM (153 aa). Residues 296–593 form a pectinesterase 45 region; that stretch reads NATVAKDGSG…FTVGPFLQGE (298 aa). Residues threonine 371 and glutamine 401 each coordinate substrate. Aspartate 424 serves as the catalytic Proton donor; for pectinesterase activity. An intrachain disulfide couples cysteine 438 to cysteine 458. Aspartate 445 acts as the Nucleophile; for pectinesterase activity in catalysis. The N-linked (GlcNAc...) asparagine glycan is linked to asparagine 491. Residues arginine 513 and tryptophan 515 each contribute to the substrate site.

It in the N-terminal section; belongs to the PMEI family. The protein in the C-terminal section; belongs to the pectinesterase family. Expressed in flower buds and pollen.

The protein resides in the membrane. The enzyme catalyses [(1-&gt;4)-alpha-D-galacturonosyl methyl ester](n) + n H2O = [(1-&gt;4)-alpha-D-galacturonosyl](n) + n methanol + n H(+). Its pathway is glycan metabolism; pectin degradation; 2-dehydro-3-deoxy-D-gluconate from pectin: step 1/5. Functionally, acts in the modification of cell walls via demethylesterification of cell wall pectin. This chain is Putative pectinesterase/pectinesterase inhibitor 45 (PME45), found in Arabidopsis thaliana (Mouse-ear cress).